Here is a 494-residue protein sequence, read N- to C-terminus: Zinc metalloproteinase/disintegrin (494 aa).

An N-terminal signal peptide occupies residues 1–20; it reads MIQVLLVTICLAVFPFQGSS. The propeptide occupies 21–193; sequence KTLKSGNVND…KKASHLVATS (173 aa). The Peptidase M12B domain maps to 201–396; it reads RYVQLVIVAD…HNPPCILNQA (196 aa). 3 cysteine pairs are disulfide-bonded: cysteine 311–cysteine 391, cysteine 351–cysteine 375, and cysteine 353–cysteine 358. Residue histidine 336 participates in Zn(2+) binding. Glutamate 337 is a catalytic residue. Zn(2+)-binding residues include histidine 340 and histidine 346. A propeptide spanning residues 410–431 is cleaved from the precursor; sequence ELLQNSVNPCYDPVTCQPKEKE. The Disintegrin domain occupies 417-478; the sequence is NPCYDPVTCQ…DCPRNPYKGE (62 aa). Disulfide bonds link cysteine 433–cysteine 442, cysteine 438–cysteine 463, cysteine 439–cysteine 468, and cysteine 451–cysteine 470. A Cell attachment site motif is present at residues 455-457; sequence RGD. The propeptide occupies 482–494; that stretch reads MEWPAPAKGSVLM.

The protein belongs to the venom metalloproteinase (M12B) family. P-II subfamily. P-IIa sub-subfamily. Monomer (disintegrin). Expressed by the venom gland.

It localises to the secreted. In terms of biological role, impairs hemostasis in the envenomed animal. Inhibits ADP-induced platelet aggregation (IC(50)=168 nM). Inhibits alpha-5/beta-1 (ITGA5/ITGB1) integrin and induces the expression of a ligand-induced binding site epitope on beta-1 integrin subunit. Has a direct chemotactic stimulus on human neutrophils in vitro. This chain is Zinc metalloproteinase/disintegrin, found in Echis ocellatus (Ocellated saw-scaled viper).